The chain runs to 758 residues: Zinc finger protein VAR3, chloroplastic (758 aa).

Positions 122 to 502 (FPGFPDELLR…PKEETQIGLI (381 aa)) are 3 X approximate repeat. RanBP2-type zinc fingers lie at residues 276 to 305 (KRGD…ARPK) and 308 to 338 (LTGS…KRPR). Copy 1 of the repeat occupies 368–415 (RWLSKVAQGGSDANSVDTDEDFPEIMPLRKGVNRYVVSTRKPPLERRL). Disordered regions lie at residues 410–470 (PLER…RFES), 512–545 (GGNQ…SEEP), 572–606 (EKMP…DSDF), 629–654 (TLPA…INKS), and 727–758 (KRKT…KGDK). Composition is skewed to basic and acidic residues over residues 457-469 (RSDD…RRFE), 519-545 (QEDK…SEEP), and 572-581 (EKMPMRKGEN). Copy 2 of the repeat occupies 547–596 (RWFKRVTELHNVSDLESAIPQEISPEKMPMRKGENRFVVSRKKDRSLTSP). Residues 688 to 736 (RWFKRVAEIKNISELSEIPDEDFPSIMPMRKGVNRFVVSKRKTPLERRL) form repeat 3.

In terms of assembly, interacts in vitro with the chloroplast-located protein CCD4/NCED4. Homodimer. Interacts with ORRM1. Interacts with PCMP-H51/CRR28 and PCMP-H12/OTP82. Interacts with ORRM6. As to expression, weakly expressed in leaves and roots.

The protein localises to the plastid. The protein resides in the chloroplast. In terms of biological role, probable component of some protein complex required for chloroplast and palisade cell development. Involved in C-to-U editing of chloroplastic RNA. Controls a large number of chloroplastic editing sites. Binds the editing recognition trans-factors PCMP-H51/CRR28 and PCMP-H12/OTP82. The chain is Zinc finger protein VAR3, chloroplastic from Arabidopsis thaliana (Mouse-ear cress).